The following is a 553-amino-acid chain: Probable malate:quinone oxidoreductase (553 aa).

The interval 524–553 (PPPKIDVNTPSQATGTAPARPAKASADMAL) is disordered.

The protein belongs to the MQO family. Requires FAD as cofactor.

It carries out the reaction (S)-malate + a quinone = a quinol + oxaloacetate. The protein operates within carbohydrate metabolism; tricarboxylic acid cycle; oxaloacetate from (S)-malate (quinone route): step 1/1. The polypeptide is Probable malate:quinone oxidoreductase (Burkholderia lata (strain ATCC 17760 / DSM 23089 / LMG 22485 / NCIMB 9086 / R18194 / 383)).